We begin with the raw amino-acid sequence, 145 residues long: Large ribosomal subunit protein uL13 (145 aa).

It belongs to the universal ribosomal protein uL13 family. In terms of assembly, part of the 50S ribosomal subunit.

This protein is one of the early assembly proteins of the 50S ribosomal subunit, although it is not seen to bind rRNA by itself. It is important during the early stages of 50S assembly. The sequence is that of Large ribosomal subunit protein uL13 from Geobacillus thermodenitrificans (strain NG80-2).